We begin with the raw amino-acid sequence, 262 residues long: GTP cyclohydrolase 1 type 2 homolog (262 aa).

Residues His-64, His-65, Asp-103, His-224, and Glu-228 each contribute to the a divalent metal cation site.

It belongs to the GTP cyclohydrolase I type 2/NIF3 family. In terms of assembly, homohexamer.

The sequence is that of GTP cyclohydrolase 1 type 2 homolog from Clostridium perfringens (strain 13 / Type A).